A 71-amino-acid chain; its full sequence is MSRAALPSLENLEDDDEFEDFATENWPMKDTELDTGDDTLWENNWDDEDIGDDDFSVQLQAELKKKGVAAN.

The interval 1-38 is disordered; sequence MSRAALPSLENLEDDDEFEDFATENWPMKDTELDTGDD. The span at 11 to 22 shows a compositional bias: acidic residues; it reads NLEDDDEFEDFA. Residues 16–25 form a UBS-II region; that stretch reads DEFEDFATEN. The segment at 38-49 is UBS-I; that stretch reads DTLWENNWDDED.

It belongs to the DSS1/SEM1 family. In terms of assembly, interacts with mlo3, rae1, nup98/nup189 and nup146. Interacts with rad24. Interacts (via UBSs) with ubiquitin (ubi3/ubi5).

The protein resides in the cytoplasm. It localises to the nucleus. Its function is as follows. Versatile protein that might stabilize multiple protein complexes involved in diverse pathways. Subunit of the 26S proteasome which plays a role in ubiquitin-dependent proteolysis. Acts as a ubiquitin receptor of the 26S proteasome, by interacting with ubiquitin chains linked by 'Lys-63' and 'Lys-48'. Involved in nuclear export of specific sets of mRNAs. Links the mRNA adapter mlo3 to rae1 for targeting mRNA-protein complex to the proteins of the nucleoporin complex (NPC). Involved in recombinational repair of DNA. Plays a critical role in linking repair and checkpoint factors to damaged DNA sites by specifically recruiting rad24 and cdc25 to the DSBs. The protein is 26S proteasome complex subunit rpn15 (rpn15) of Schizosaccharomyces pombe (strain 972 / ATCC 24843) (Fission yeast).